Reading from the N-terminus, the 441-residue chain is tRNA pseudouridine synthase Pus10 (441 aa).

Asp-268 (nucleophile) is an active-site residue. Substrate contacts are provided by Tyr-333 and Tyr-405.

This sequence belongs to the pseudouridine synthase Pus10 family.

The catalysed reaction is uridine(54) in tRNA = pseudouridine(54) in tRNA. It carries out the reaction uridine(55) in tRNA = pseudouridine(55) in tRNA. Responsible for synthesis of pseudouridine from uracil-54 and uracil-55 in the psi GC loop of transfer RNAs. This chain is tRNA pseudouridine synthase Pus10, found in Thermosphaera aggregans (strain DSM 11486 / M11TL).